A 444-amino-acid chain; its full sequence is tRNA-2-methylthio-N(6)-dimethylallyladenosine synthase (444 aa).

The 115-residue stretch at 7-121 (KTFHVKSFGC…LPELIARAER (115 aa)) folds into the MTTase N-terminal domain. Positions 16, 52, 84, 158, 162, and 165 each coordinate [4Fe-4S] cluster. The Radical SAM core domain occupies 144-376 (GNQRPTAFLT…QALLNEQQQA (233 aa)). A TRAM domain is found at 379–441 (EATVGRTTRL…PNSLGAEPLM (63 aa)).

Belongs to the methylthiotransferase family. MiaB subfamily. Monomer. Requires [4Fe-4S] cluster as cofactor.

The protein resides in the cytoplasm. The enzyme catalyses N(6)-dimethylallyladenosine(37) in tRNA + (sulfur carrier)-SH + AH2 + 2 S-adenosyl-L-methionine = 2-methylsulfanyl-N(6)-dimethylallyladenosine(37) in tRNA + (sulfur carrier)-H + 5'-deoxyadenosine + L-methionine + A + S-adenosyl-L-homocysteine + 2 H(+). Functionally, catalyzes the methylthiolation of N6-(dimethylallyl)adenosine (i(6)A), leading to the formation of 2-methylthio-N6-(dimethylallyl)adenosine (ms(2)i(6)A) at position 37 in tRNAs that read codons beginning with uridine. In Sphingopyxis alaskensis (strain DSM 13593 / LMG 18877 / RB2256) (Sphingomonas alaskensis), this protein is tRNA-2-methylthio-N(6)-dimethylallyladenosine synthase.